The sequence spans 277 residues: 3-methyl-2-oxobutanoate hydroxymethyltransferase (277 aa).

Residues D53 and D96 each contribute to the Mg(2+) site. 3-methyl-2-oxobutanoate contacts are provided by residues 53–54, D96, and K126; that span reads DS. Residue E128 participates in Mg(2+) binding. Residue E195 is the Proton acceptor of the active site.

This sequence belongs to the PanB family. As to quaternary structure, homodecamer; pentamer of dimers. Mg(2+) is required as a cofactor.

The protein localises to the cytoplasm. The catalysed reaction is 3-methyl-2-oxobutanoate + (6R)-5,10-methylene-5,6,7,8-tetrahydrofolate + H2O = 2-dehydropantoate + (6S)-5,6,7,8-tetrahydrofolate. It participates in cofactor biosynthesis; (R)-pantothenate biosynthesis; (R)-pantoate from 3-methyl-2-oxobutanoate: step 1/2. In terms of biological role, catalyzes the reversible reaction in which hydroxymethyl group from 5,10-methylenetetrahydrofolate is transferred onto alpha-ketoisovalerate to form ketopantoate. The polypeptide is 3-methyl-2-oxobutanoate hydroxymethyltransferase (Chlorobium phaeobacteroides (strain DSM 266 / SMG 266 / 2430)).